A 518-amino-acid chain; its full sequence is GMP synthase [glutamine-hydrolyzing] (518 aa).

In terms of domain architecture, Glutamine amidotransferase type-1 spans Thr-8 to Asn-201. Cys-85 functions as the Nucleophile in the catalytic mechanism. Active-site residues include His-175 and Glu-177. In terms of domain architecture, GMPS ATP-PPase spans Trp-202–Arg-393. Ser-229 to Ser-235 is a binding site for ATP.

Homodimer.

The catalysed reaction is XMP + L-glutamine + ATP + H2O = GMP + L-glutamate + AMP + diphosphate + 2 H(+). It participates in purine metabolism; GMP biosynthesis; GMP from XMP (L-Gln route): step 1/1. Catalyzes the synthesis of GMP from XMP. This Bartonella henselae (strain ATCC 49882 / DSM 28221 / CCUG 30454 / Houston 1) (Rochalimaea henselae) protein is GMP synthase [glutamine-hydrolyzing].